Here is a 37-residue protein sequence, read N- to C-terminus: Large ribosomal subunit protein bL36 (37 aa).

The protein belongs to the bacterial ribosomal protein bL36 family.

This is Large ribosomal subunit protein bL36 from Salinispora arenicola (strain CNS-205).